Here is a 581-residue protein sequence, read N- to C-terminus: Proline--tRNA ligase (581 aa).

Belongs to the class-II aminoacyl-tRNA synthetase family. ProS type 1 subfamily. Homodimer.

Its subcellular location is the cytoplasm. It catalyses the reaction tRNA(Pro) + L-proline + ATP = L-prolyl-tRNA(Pro) + AMP + diphosphate. In terms of biological role, catalyzes the attachment of proline to tRNA(Pro) in a two-step reaction: proline is first activated by ATP to form Pro-AMP and then transferred to the acceptor end of tRNA(Pro). As ProRS can inadvertently accommodate and process non-cognate amino acids such as alanine and cysteine, to avoid such errors it has two additional distinct editing activities against alanine. One activity is designated as 'pretransfer' editing and involves the tRNA(Pro)-independent hydrolysis of activated Ala-AMP. The other activity is designated 'posttransfer' editing and involves deacylation of mischarged Ala-tRNA(Pro). The misacylated Cys-tRNA(Pro) is not edited by ProRS. This chain is Proline--tRNA ligase, found in Blochmanniella floridana.